Consider the following 583-residue polypeptide: Moesin/ezrin/radixin homolog 1 (583 aa).

The 291-residue stretch at 11–301 folds into the FERM domain; the sequence is MNVRVTTMDA…GNHELYMRRR (291 aa). 2 disordered regions span residues 466 to 518 and 539 to 558; these read TTTP…RTLA and RDDT…VRQG. Positions 476-485 are enriched in acidic residues; the sequence is EEEEDNEEEL. Residues 496–518 are compositionally biased toward basic and acidic residues; the sequence is DYSKDFDTDEHIKDPVEERRTLA. Thr-564 bears the Phosphothreonine mark.

Interacts with cytoskeletal actin.

The protein resides in the cell junction. It is found in the adherens junction. Its subcellular location is the cell projection. It localises to the microvillus. The protein localises to the rhabdomere. The protein resides in the cell membrane. It is found in the cytoplasm. Its subcellular location is the cytoskeleton. In terms of biological role, involved in connections of major cytoskeletal structures to the plasma membrane. The chain is Moesin/ezrin/radixin homolog 1 from Aedes aegypti (Yellowfever mosquito).